A 242-amino-acid chain; its full sequence is Ribonuclease 3 (242 aa).

Residues 14–142 (LRRFAARFAL…VIGALYLSTG (129 aa)) enclose the RNase III domain. Glu56 serves as a coordination point for Mg(2+). Asp60 is an active-site residue. Residues Asp128 and Glu131 each coordinate Mg(2+). Glu131 is a catalytic residue. One can recognise a DRBM domain in the interval 170–235 (NHKSALQELT…ARGAYAALRS (66 aa)).

The protein belongs to the ribonuclease III family. As to quaternary structure, homodimer. Mg(2+) is required as a cofactor.

It localises to the cytoplasm. It carries out the reaction Endonucleolytic cleavage to 5'-phosphomonoester.. In terms of biological role, digests double-stranded RNA. Involved in the processing of primary rRNA transcript to yield the immediate precursors to the large and small rRNAs (23S and 16S). Processes some mRNAs, and tRNAs when they are encoded in the rRNA operon. Processes pre-crRNA and tracrRNA of type II CRISPR loci if present in the organism. This Gloeobacter violaceus (strain ATCC 29082 / PCC 7421) protein is Ribonuclease 3.